The primary structure comprises 202 residues: Small ribosomal subunit protein uS5 (202 aa).

The region spanning 42–105 (LKDEVLKIMP…ILAKLSIVPV (64 aa)) is the S5 DRBM domain. Residue Thr-192 is modified to Phosphothreonine.

The protein belongs to the universal ribosomal protein uS5 family. As to quaternary structure, component of the small ribosomal subunit. Interacts with zinc finger protein ZNF277 (via zinc-finger domains); the interaction is direct; the interaction is extra-ribosomal. Interaction with ZNF277 competes with the binding of RPS2 to protein arginine methyltransferase PRMT3. Citrullinated by PADI4 in the Arg/Gly-rich region. In terms of processing, asymmetric arginine dimethylation by PRMT3 occurs at multiple sites in the Arg/Gly-rich region. Post-translationally, monoubiquitinated by RNF10 when a ribosome has stalled during translation, leading to its degradation by the proteasome. Deubiquitinated by USP10, preventing degradation by the proteasome and promoting 40S ribosome subunit recycling following ribosome dissociation.

It localises to the cytoplasm. It is found in the nucleus. Its subcellular location is the nucleolus. In terms of biological role, component of the ribosome, a large ribonucleoprotein complex responsible for the synthesis of proteins in the cell. The small ribosomal subunit (SSU) binds messenger RNAs (mRNAs) and translates the encoded message by selecting cognate aminoacyl-transfer RNA (tRNA) molecules. The large subunit (LSU) contains the ribosomal catalytic site termed the peptidyl transferase center (PTC), which catalyzes the formation of peptide bonds, thereby polymerizing the amino acids delivered by tRNAs into a polypeptide chain. The nascent polypeptides leave the ribosome through a tunnel in the LSU and interact with protein factors that function in enzymatic processing, targeting, and the membrane insertion of nascent chains at the exit of the ribosomal tunnel. Plays a role in the assembly and function of the 40S ribosomal subunit. Mutations in this protein affects the control of translational fidelity. Involved in nucleolar processing of pre-18S ribosomal RNA and ribosome assembly. The chain is Small ribosomal subunit protein uS5 (RPS2) from Cricetulus griseus (Chinese hamster).